We begin with the raw amino-acid sequence, 518 residues long: Sodium-dependent glucose transporter 1 (518 aa).

The next 12 helical transmembrane spans lie at 19–39 (TFQD…FIFV), 53–73 (GFLV…SATT), 82–102 (CKTA…IGIL), 107–127 (NVLI…ALHF), 139–159 (LAKL…SDFH), 221–241 (FRRA…FFFY), 307–327 (TSSL…IATS), 347–367 (YTTI…LGEM), 376–396 (LQGK…ASIA), 400–420 (LFPV…KEDR), 438–458 (EEEN…EMIE), and 466–486 (SIIE…YNQY). Over residues 414-426 (RQRKEDRKSEDQK) the composition is skewed to basic and acidic residues. The disordered stretch occupies residues 414–448 (RQRKEDRKSEDQKALLSSSGLNEYEEENEEEDAEK). The span at 436-448 (EYEEENEEEDAEK) shows a compositional bias: acidic residues.

The protein belongs to the major facilitator superfamily.

The protein localises to the apical cell membrane. May function as a sodium-dependent glucose transporter. Potential channels for urea in the inner medulla of kidney. This is Sodium-dependent glucose transporter 1 from Homo sapiens (Human).